The following is a 301-amino-acid chain: MATTKRVLYVGGLAEEVDDKVLHAAFIPFGDITDIQIPLDYETEKHRGFAFVEFELAEDAAAAIDNMNESELFGRTIRVNLAKPMRIKEGSSRPVWSDDDWLKKFSGKTLEENKEEEGSEPPKAETQEGEPAAKKARSNPQVYMDIKIGNKPAGRIQMLLRSDVVPMTAENFRCLCTHEKGFGFKGSSFHRIIPQFMCQGGDFTNHNGTGGKSIYGKKFDDENFILKHTGPGLLSMANSGPNTNGSQFFLTCDKTDWLDGKHVVFGEVTEGLDVLRQIEARGSKDGKPKQKVIIADCGEYV.

The RRM domain occupies 5–83; it reads KRVLYVGGLA…GRTIRVNLAK (79 aa). Ser-91, Ser-97, and Ser-119 each carry phosphoserine. The tract at residues 107-140 is disordered; that stretch reads GKTLEENKEEEGSEPPKAETQEGEPAAKKARSNP. One can recognise a PPIase cyclophilin-type domain in the interval 143–299; sequence YMDIKIGNKP…QKVIIADCGE (157 aa).

The protein belongs to the cyclophilin-type PPIase family. PPIase E subfamily. As to quaternary structure, identified in the spliceosome C complex. Component of the XAB2 complex, a multimeric protein complex composed of XAB2, PRPF19, AQR, ZNF830, ISY1, and PPIE. Identified in a pentameric intron-binding (IB) complex composed of AQR, XAB2, ISY1, ZNF830 and PPIE that is incorporated into the spliceosome as a preassembled complex. The IB complex does not contain PRPF19. Interacts (via RNA-binding domain) with KMT2A (via the third PHD-type zinc-finger).

It is found in the nucleus. The catalysed reaction is [protein]-peptidylproline (omega=180) = [protein]-peptidylproline (omega=0). Its function is as follows. Involved in pre-mRNA splicing as component of the spliceosome. Combines RNA-binding and PPIase activities. Binds mRNA and has a preference for single-stranded RNA molecules with poly-A and poly-U stretches, suggesting it binds to the poly(A)-region in the 3'-UTR of mRNA molecules. Catalyzes the cis-trans isomerization of proline imidic peptide bonds in proteins. Inhibits KMT2A activity; this requires proline isomerase activity. The chain is Peptidyl-prolyl cis-trans isomerase E (PPIE) from Pongo abelii (Sumatran orangutan).